The sequence spans 653 residues: Sodium-dependent nutrient amino acid transporter 1 (653 aa).

The disordered stretch occupies residues 1-55 (MELKGVHQQNGTSNGTGAAGTEGESPPPAPAPATAEAAASLETTTEKVDAEQQKT). The Cytoplasmic portion of the chain corresponds to 1–59 (MELKGVHQQNGTSNGTGAAGTEGESPPPAPAPATAEAAASLETTTEKVDAEQQKTERTN). Composition is skewed to low complexity over residues 10–24 (NGTS…TEGE) and 32–43 (PATAEAAASLET). The span at 44–55 (TTEKVDAEQQKT) shows a compositional bias: basic and acidic residues. A run of 4 helical transmembrane segments spans residues 60–80 (WGNG…LGNV), 93–113 (GAFL…MYYL), 125–145 (TVKI…QAFA), and 146–166 (TICI…YLFV). 2 N-linked (GlcNAc...) asparagine glycosylation sites follow: Asn-202 and Asn-205. Helical transmembrane passes span 241-261 (PDWK…LVIM), 270-290 (AAYF…VRAV), 319-339 (AVVQ…MFAS), 353-373 (IVTT…FAIL), 413-433 (LFSV…IVAL), 459-479 (ICGF…ILTL), 486-506 (TYVV…IYGM), 528-548 (CWSF…MVTI), and 565-585 (AGWL…MWYI).

This sequence belongs to the sodium:neurotransmitter symporter (SNF) (TC 2.A.22) family.

Its subcellular location is the membrane. Unusual broad substrate spectrum amino acid:sodium cotransporter that promotes absorption of the D isomers of essential amino acids. Neutral amino acids are the preferred substrates, especially methionine and phenylalanine. This is Sodium-dependent nutrient amino acid transporter 1 from Drosophila pseudoobscura pseudoobscura (Fruit fly).